Reading from the N-terminus, the 333-residue chain is Ketol-acid reductoisomerase (NADP(+)) (333 aa).

The KARI N-terminal Rossmann domain maps to alanine 2–threonine 182. NADP(+) contacts are provided by residues tyrosine 25 to glutamine 28, serine 51, serine 53, and aspartate 83 to glutamine 86. Residue histidine 108 is part of the active site. Glycine 134 is an NADP(+) binding site. Residues threonine 183–leucine 327 form the KARI C-terminal knotted domain. Residues aspartate 191, glutamate 195, glutamate 227, and glutamate 231 each coordinate Mg(2+). Serine 252 contributes to the substrate binding site.

Belongs to the ketol-acid reductoisomerase family. Mg(2+) serves as cofactor.

The enzyme catalyses (2R)-2,3-dihydroxy-3-methylbutanoate + NADP(+) = (2S)-2-acetolactate + NADPH + H(+). The catalysed reaction is (2R,3R)-2,3-dihydroxy-3-methylpentanoate + NADP(+) = (S)-2-ethyl-2-hydroxy-3-oxobutanoate + NADPH + H(+). It participates in amino-acid biosynthesis; L-isoleucine biosynthesis; L-isoleucine from 2-oxobutanoate: step 2/4. The protein operates within amino-acid biosynthesis; L-valine biosynthesis; L-valine from pyruvate: step 2/4. In terms of biological role, involved in the biosynthesis of branched-chain amino acids (BCAA). Catalyzes an alkyl-migration followed by a ketol-acid reduction of (S)-2-acetolactate (S2AL) to yield (R)-2,3-dihydroxy-isovalerate. In the isomerase reaction, S2AL is rearranged via a Mg-dependent methyl migration to produce 3-hydroxy-3-methyl-2-ketobutyrate (HMKB). In the reductase reaction, this 2-ketoacid undergoes a metal-dependent reduction by NADPH to yield (R)-2,3-dihydroxy-isovalerate. This is Ketol-acid reductoisomerase (NADP(+)) from Aquifex aeolicus (strain VF5).